The following is a 124-amino-acid chain: Non-specific lipid-transfer protein (124 aa).

Positions 1–26 are cleaved as a signal peptide; that stretch reads MANSGVMKLVCLVLACMVVAAPLAEA. 4 cysteine pairs are disulfide-bonded: cysteine 30–cysteine 77, cysteine 40–cysteine 54, cysteine 55–cysteine 100, and cysteine 75–cysteine 114.

Belongs to the plant LTP family.

In terms of biological role, plant non-specific lipid-transfer proteins transfer phospholipids as well as galactolipids across membranes. May play a role in wax or cutin deposition in the cell walls of expanding epidermal cells and certain secretory tissues. This chain is Non-specific lipid-transfer protein, found in Macadamia integrifolia (Macadamia nut).